The primary structure comprises 68 residues: DNA-directed RNA polymerase subunit omega (68 aa).

The protein belongs to the RNA polymerase subunit omega family. As to quaternary structure, the RNAP catalytic core consists of 2 alpha, 1 beta, 1 beta' and 1 omega subunit. When a sigma factor is associated with the core the holoenzyme is formed, which can initiate transcription.

The enzyme catalyses RNA(n) + a ribonucleoside 5'-triphosphate = RNA(n+1) + diphosphate. Functionally, promotes RNA polymerase assembly. Latches the N- and C-terminal regions of the beta' subunit thereby facilitating its interaction with the beta and alpha subunits. The sequence is that of DNA-directed RNA polymerase subunit omega from Neisseria meningitidis serogroup C (strain 053442).